Consider the following 181-residue polypeptide: Inorganic pyrophosphatase 2 (181 aa).

Substrate contacts are provided by K30, R44, and Y56. 3 residues coordinate Mg(2+): D66, D71, and D103. Y142 provides a ligand contact to substrate.

It belongs to the PPase family. In terms of assembly, homohexamer. It depends on Mg(2+) as a cofactor.

It is found in the cytoplasm. The enzyme catalyses diphosphate + H2O = 2 phosphate + H(+). Functionally, catalyzes the hydrolysis of inorganic pyrophosphate (PPi) forming two phosphate ions. The chain is Inorganic pyrophosphatase 2 from Pseudomonas syringae pv. tomato (strain ATCC BAA-871 / DC3000).